The chain runs to 337 residues: 5-formaminoimidazole-4-carboxamide-1-(beta)-D-ribofuranosyl 5'-monophosphate synthetase (337 aa).

5-amino-1-(5-phospho-beta-D-ribosyl)imidazole-4-carboxamide is bound by residues histidine 23 and serine 87. The ATP-grasp domain maps to 121 to 328; that stretch reads MRLLEYAGIP…IAHEIVNAVK (208 aa). Residues 144–191 and glutamate 213 each bind ATP; that span reads PVIV…VPAY. Position 233 (asparagine 233) interacts with 5-amino-1-(5-phospho-beta-D-ribosyl)imidazole-4-carboxamide. 2 residues coordinate Mg(2+): glutamate 272 and glutamate 285.

This sequence belongs to the phosphohexose mutase family. The cofactor is Mg(2+). Mn(2+) serves as cofactor.

The catalysed reaction is 5-amino-1-(5-phospho-beta-D-ribosyl)imidazole-4-carboxamide + formate + ATP = 5-formamido-1-(5-phospho-D-ribosyl)imidazole-4-carboxamide + ADP + phosphate. It participates in purine metabolism; IMP biosynthesis via de novo pathway; 5-formamido-1-(5-phospho-D-ribosyl)imidazole-4-carboxamide from 5-amino-1-(5-phospho-D-ribosyl)imidazole-4-carboxamide (formate route): step 1/1. Its function is as follows. Catalyzes the ATP- and formate-dependent formylation of 5-aminoimidazole-4-carboxamide-1-beta-d-ribofuranosyl 5'-monophosphate (AICAR) to 5-formaminoimidazole-4-carboxamide-1-beta-d-ribofuranosyl 5'-monophosphate (FAICAR) in the absence of folates. The protein is 5-formaminoimidazole-4-carboxamide-1-(beta)-D-ribofuranosyl 5'-monophosphate synthetase of Caldivirga maquilingensis (strain ATCC 700844 / DSM 13496 / JCM 10307 / IC-167).